Here is a 349-residue protein sequence, read N- to C-terminus: 6-phosphogluconolactonase (349 aa).

The disordered stretch occupies residues 125–151 (LQSPVSEAAHTGKGPHERQEKPHTHYA). Residues 138–147 (GPHERQEKPH) show a composition bias toward basic and acidic residues.

It belongs to the cycloisomerase 2 family.

The enzyme catalyses 6-phospho-D-glucono-1,5-lactone + H2O = 6-phospho-D-gluconate + H(+). The protein operates within carbohydrate degradation; pentose phosphate pathway; D-ribulose 5-phosphate from D-glucose 6-phosphate (oxidative stage): step 2/3. Catalyzes the hydrolysis of 6-phosphogluconolactone to 6-phosphogluconate. In Bacillus subtilis (strain 168), this protein is 6-phosphogluconolactonase (pgl).